Here is a 93-residue protein sequence, read N- to C-terminus: MSRSIKKGPFIDDHLMKKTLKAKEGKDNRPIKTWSRRSTILPEMIGFTYNVHNGRVFIPVYITENHVGYKLGEFAPTRTFKGHKGSVQKKIGK.

Belongs to the universal ribosomal protein uS19 family.

Functionally, protein S19 forms a complex with S13 that binds strongly to the 16S ribosomal RNA. This is Small ribosomal subunit protein uS19 (rpsS) from Helicobacter pylori (strain ATCC 700392 / 26695) (Campylobacter pylori).